A 1226-amino-acid chain; its full sequence is Chitin synthase IV (1226 aa).

Positions 1–205 (MSLPERPGGS…SRKNPATAEQ (205 aa)) are disordered. Over residues 49–65 (SVSSYAETISNPHANTE) the composition is skewed to polar residues. The segment covering 66–75 (TLPLSPTHPT) has biased composition (low complexity). Over residues 94–107 (IRPERNRIDKDHRN) the composition is skewed to basic and acidic residues. Positions 134–151 (DVSTEPSGGSQTHGSFAD) are enriched in polar residues. Positions 163 to 172 (MSGDDQEKGN) are enriched in basic and acidic residues. The segment covering 173–198 (TRVKSRPRRSKSGKITKETRHRKSRK) has biased composition (basic residues). The chain crosses the membrane as a helical span at residues 246–266 (MGLISIILVIMAIVGFLTFGF). Residues N381, N421, and N443 are each glycosylated (N-linked (GlcNAc...) asparagine). A helical membrane pass occupies residues 516 to 536 (ILILSVVGTRFVLALIFQWFI). Positions 572 to 671 (LPGDVGSSAM…PGPAGFIHDS (100 aa)) are disordered. 2 stretches are compositionally biased toward polar residues: residues 580-601 (AMGS…TSRF) and 618-643 (TTMS…NDSR). A glycan (N-linked (GlcNAc...) asparagine) is linked at N640. Positions 649-666 (PDPYSSAASPSDGPGPAG) are enriched in low complexity. N-linked (GlcNAc...) asparagine glycosylation is found at N787 and N1035. 3 helical membrane passes run 1060-1080 (FVVF…AFTF), 1094-1114 (IIPL…ILVT), and 1118-1138 (WSYV…NFVL).

Belongs to the chitin synthase family. Class IV subfamily. In terms of tissue distribution, highly expressed in conidia.

It localises to the cell membrane. It carries out the reaction [(1-&gt;4)-N-acetyl-beta-D-glucosaminyl](n) + UDP-N-acetyl-alpha-D-glucosamine = [(1-&gt;4)-N-acetyl-beta-D-glucosaminyl](n+1) + UDP + H(+). Functionally, polymerizes chitin, a structural polymer of the cell wall and septum, by transferring the sugar moiety of UDP-GlcNAc to the non-reducing end of the growing chitin polymer. Contributes to the production of conidia and the ability of fungal conidia to germinate. Involved in fungal stress tolerances. This Metarhizium acridum (strain CQMa 102) protein is Chitin synthase IV.